We begin with the raw amino-acid sequence, 63 residues long: Beta-defensin 4 (63 aa).

Positions 1 to 22 are cleaved as a signal peptide; sequence MRLHHLLLAVLFLVLSAGSGFT. Gln-23 carries the post-translational modification Pyrrolidone carboxylic acid. 3 disulfide bridges follow: Cys-31-Cys-60, Cys-38-Cys-53, and Cys-43-Cys-61.

It belongs to the beta-defensin family. Neutrophilic granules.

It is found in the secreted. Functionally, has bactericidal activity. Active against E.coli ML35 and S.aureus 502A. This chain is Beta-defensin 4 (DEFB4), found in Bos taurus (Bovine).